Reading from the N-terminus, the 458-residue chain is Hepatocyte nuclear factor 3-beta (458 aa).

Residues 14–93 (DWSSYYAEPE…AGAMAGMSGS (80 aa)) form a transactivation domain 1 region. The Nuclear localization signal motif lies at 106–113 (LSPSLSPL). At threonine 156 the chain carries Phosphothreonine; by PKB/AKT1. Residues 159–252 (KPPYSYISLI…ENGCYLRRQK (94 aa)) constitute a DNA-binding region (fork-head). 2 positions are modified to phosphoserine: serine 212 and serine 283. The segment at 286 to 365 (QLGEAAGSAS…PGLPPEAHLK (80 aa)) is disordered. A compositionally biased stretch (polar residues) spans 294–310 (ASETPAGTESPHSSASP). Threonine 301 is modified (phosphothreonine). Phosphoserine is present on residues serine 303, serine 306, serine 307, and serine 309. Low complexity predominate over residues 339-352 (PGQQQQAAAHLLGP). The segment at 361–458 (EAHLKPEHHY…VYSRPIMNSS (98 aa)) is transactivation domain 2. 2 positions are modified to phosphoserine: serine 437 and serine 458.

In terms of assembly, binds DNA as a monomer. Binds TLE1. Interacts with FOXA1 and FOXA3. Interacts with PRKDC. Interacts with AKT1. Interacts with TET1; this interaction may recruit TET1 to specific genomic loci to mediate their demethylation. In terms of processing, phosphorylation on Thr-156 abolishes binding to target promoters and subsequent transcription activation upon insulin stimulation. As to expression, liver.

The protein localises to the nucleus. It localises to the cytoplasm. Transcription factor that is involved in embryonic development, establishment of tissue-specific gene expression and regulation of gene expression in differentiated tissues. Is thought to act as a 'pioneer' factor opening the compacted chromatin for other proteins through interactions with nucleosomal core histones and thereby replacing linker histones at target enhancer and/or promoter sites. Binds DNA with the consensus sequence 5'-[AC]A[AT]T[AG]TT[GT][AG][CT]T[CT]-3'. In embryonic development is required for notochord formation. Involved in the development of multiple endoderm-derived organ systems such as the liver, pancreas and lungs; FOXA1 and FOXA2 seem to have at least in part redundant roles. Originally described as a transcription activator for a number of liver genes such as AFP, albumin, tyrosine aminotransferase, PEPCK, etc. Interacts with the cis-acting regulatory regions of these genes. Involved in glucose homeostasis; regulates the expression of genes important for glucose sensing in pancreatic beta-cells and glucose homeostasis. Involved in regulation of fat metabolism. Acts synergistically with ONECUT1 to activate transcription of female-specific CYP2C12; the function is inhibited by growth hormone-activated STAT5B. Acts synergistically with HNF4A to activate transcription of APOA1. The chain is Hepatocyte nuclear factor 3-beta (Foxa2) from Rattus norvegicus (Rat).